Here is a 134-residue protein sequence, read N- to C-terminus: MRSVLTISASLLFGLALSSVAHANDHKILGVIAMPRNETNDLTLKTPVCRIVKRIQLTADHGDIELSGASVYFKTARSASQSLNVPSSIKEGQTTGWININSDNDNKRCVSKITFSGHTVNSSDMARLKVIGDD.

An N-terminal signal peptide occupies residues 1-23; the sequence is MRSVLTISASLLFGLALSSVAHA.

Belongs to the UPF0412 family.

This is UPF0412 protein YaaI from Salmonella paratyphi B (strain ATCC BAA-1250 / SPB7).